Consider the following 111-residue polypeptide: UPF0321 protein P20C8.02c (111 aa).

A signal peptide spans 1–17; sequence MLLLFCICCVFIKLVLA. Asn-20 carries an N-linked (GlcNAc...) asparagine glycan.

Belongs to the UPF0321 family.

The protein is UPF0321 protein P20C8.02c of Schizosaccharomyces pombe (strain 972 / ATCC 24843) (Fission yeast).